Consider the following 122-residue polypeptide: Large ribosomal subunit protein bL17 (122 aa).

Belongs to the bacterial ribosomal protein bL17 family. As to quaternary structure, part of the 50S ribosomal subunit. Contacts protein L32.

This is Large ribosomal subunit protein bL17 from Neisseria gonorrhoeae (strain ATCC 700825 / FA 1090).